Reading from the N-terminus, the 429-residue chain is Adenylosuccinate synthetase (429 aa).

Residues 13–19 and 41–43 each bind GTP; these read GDEGKGK and GHT. The active-site Proton acceptor is the aspartate 14. Mg(2+) contacts are provided by aspartate 14 and glycine 41. IMP-binding positions include 14-17, 39-42, threonine 130, arginine 144, glutamine 224, threonine 239, and arginine 303; these read DEGK and NAGH. Residue histidine 42 is the Proton donor of the active site. 299–305 contributes to the substrate binding site; the sequence is ATTGRAR. GTP-binding positions include arginine 305, 331-333, and 412-414; these read KLD and STG.

Belongs to the adenylosuccinate synthetase family. As to quaternary structure, homodimer. Mg(2+) serves as cofactor.

It is found in the cytoplasm. The catalysed reaction is IMP + L-aspartate + GTP = N(6)-(1,2-dicarboxyethyl)-AMP + GDP + phosphate + 2 H(+). It functions in the pathway purine metabolism; AMP biosynthesis via de novo pathway; AMP from IMP: step 1/2. Its function is as follows. Plays an important role in the de novo pathway of purine nucleotide biosynthesis. Catalyzes the first committed step in the biosynthesis of AMP from IMP. The polypeptide is Adenylosuccinate synthetase (Psychrobacter cryohalolentis (strain ATCC BAA-1226 / DSM 17306 / VKM B-2378 / K5)).